A 240-amino-acid polypeptide reads, in one-letter code: Ubiquinone biosynthesis O-methyltransferase (240 aa).

4 residues coordinate S-adenosyl-L-methionine: Arg-44, Gly-64, Asp-85, and Met-129.

It belongs to the methyltransferase superfamily. UbiG/COQ3 family.

It catalyses the reaction a 3-demethylubiquinol + S-adenosyl-L-methionine = a ubiquinol + S-adenosyl-L-homocysteine + H(+). The catalysed reaction is a 3-(all-trans-polyprenyl)benzene-1,2-diol + S-adenosyl-L-methionine = a 2-methoxy-6-(all-trans-polyprenyl)phenol + S-adenosyl-L-homocysteine + H(+). Its pathway is cofactor biosynthesis; ubiquinone biosynthesis. In terms of biological role, O-methyltransferase that catalyzes the 2 O-methylation steps in the ubiquinone biosynthetic pathway. In Escherichia coli O6:K15:H31 (strain 536 / UPEC), this protein is Ubiquinone biosynthesis O-methyltransferase.